The primary structure comprises 473 residues: mRNA export factor ICP27 homolog (473 aa).

Disordered regions lie at residues 57–81 (QELL…NSIY) and 123–143 (QTKR…NFPM). The Zn(2+) site is built by Cys362, His438, Cys442, and Cys447. The CHC2-type zinc finger occupies 362 to 447 (CKYGTEKRSM…HTRRCSDPAC (86 aa)).

This sequence belongs to the HHV-1 ICP27 protein family. As to quaternary structure, associates in a complex with RNA, and host export factors NXF1/TAP and ALYREF; these interactions allow nuclear export of viral transcripts.

Its subcellular location is the host cytoplasm. The protein resides in the host nucleus. Multifunctional regulator of the expression of viral genes that mediates nuclear export of viral intronless mRNAs. This immediate early (EI) protein promotes the nuclear export of viral intronless mRNAs by interacting with mRNAs and host NXF1/TAP. In Gallus gallus (Chicken), this protein is mRNA export factor ICP27 homolog.